Reading from the N-terminus, the 610-residue chain is Elongation factor 4 (610 aa).

The tr-type G domain occupies 11–193 (ENIRNFSIIA…QIVEKVPAPS (183 aa)). Residues 23–28 (DHGKST) and 140–143 (NKID) contribute to the GTP site.

The protein belongs to the TRAFAC class translation factor GTPase superfamily. Classic translation factor GTPase family. LepA subfamily.

It is found in the cell membrane. It carries out the reaction GTP + H2O = GDP + phosphate + H(+). Its function is as follows. Required for accurate and efficient protein synthesis under certain stress conditions. May act as a fidelity factor of the translation reaction, by catalyzing a one-codon backward translocation of tRNAs on improperly translocated ribosomes. Back-translocation proceeds from a post-translocation (POST) complex to a pre-translocation (PRE) complex, thus giving elongation factor G a second chance to translocate the tRNAs correctly. Binds to ribosomes in a GTP-dependent manner. The chain is Elongation factor 4 from Streptococcus equi subsp. zooepidemicus (strain H70).